The chain runs to 328 residues: tRNA dimethylallyltransferase (328 aa).

Residue 25 to 32 (GPTAVGKT) participates in ATP binding. Substrate is bound at residue 27-32 (TAVGKT). Residues 50–53 (DSMQ) are interaction with substrate tRNA.

This sequence belongs to the IPP transferase family. In terms of assembly, monomer. Mg(2+) is required as a cofactor.

The enzyme catalyses adenosine(37) in tRNA + dimethylallyl diphosphate = N(6)-dimethylallyladenosine(37) in tRNA + diphosphate. Catalyzes the transfer of a dimethylallyl group onto the adenine at position 37 in tRNAs that read codons beginning with uridine, leading to the formation of N6-(dimethylallyl)adenosine (i(6)A). This chain is tRNA dimethylallyltransferase, found in Halothermothrix orenii (strain H 168 / OCM 544 / DSM 9562).